The primary structure comprises 360 residues: Autoinducer 2 import system permease protein LsrC (360 aa).

9 helical membrane-spanning segments follow: residues 18–38 (TALL…RNYF), 45–65 (MIFS…MVML), 76–96 (ITGL…GLAL), 99–119 (LFAL…VTWL), 121–141 (IPAI…MLLL), 161–181 (ILFS…AMAL), 219–239 (MNGV…GFIP), 255–275 (VLGG…ILGA), and 290–310 (LPAW…LVFD). The tract at residues 334 to 360 (VAPDKKVKSNNNKAPSSKSFTKKEVVR) is disordered. A compositionally biased stretch (low complexity) spans 342–352 (SNNNKAPSSKS).

Belongs to the binding-protein-dependent transport system permease family. AraH/RbsC subfamily. The complex is composed of two ATP-binding proteins (LsrA), two transmembrane proteins (LsrC and LsrD) and a solute-binding protein (LsrB).

The protein resides in the cell inner membrane. In terms of biological role, part of the ABC transporter complex LsrABCD involved in autoinducer 2 (AI-2) import. Probably responsible for the translocation of the substrate across the membrane. The sequence is that of Autoinducer 2 import system permease protein LsrC (lsrC) from Yersinia enterocolitica serotype O:8 / biotype 1B (strain NCTC 13174 / 8081).